Consider the following 383-residue polypeptide: ATP phosphoribosyltransferase regulatory subunit (383 aa).

It belongs to the class-II aminoacyl-tRNA synthetase family. HisZ subfamily. Heteromultimer composed of HisG and HisZ subunits.

The protein localises to the cytoplasm. Its pathway is amino-acid biosynthesis; L-histidine biosynthesis; L-histidine from 5-phospho-alpha-D-ribose 1-diphosphate: step 1/9. Required for the first step of histidine biosynthesis. May allow the feedback regulation of ATP phosphoribosyltransferase activity by histidine. The polypeptide is ATP phosphoribosyltransferase regulatory subunit (Paraburkholderia phymatum (strain DSM 17167 / CIP 108236 / LMG 21445 / STM815) (Burkholderia phymatum)).